The sequence spans 201 residues: Small ribosomal subunit protein uS4 (201 aa).

The 61-residue stretch at 91–151 (SRLDNVVYRA…EKSQKMNWFE (61 aa)) folds into the S4 RNA-binding domain.

The protein belongs to the universal ribosomal protein uS4 family. As to quaternary structure, part of the 30S ribosomal subunit. Contacts protein S5. The interaction surface between S4 and S5 is involved in control of translational fidelity.

Its function is as follows. One of the primary rRNA binding proteins, it binds directly to 16S rRNA where it nucleates assembly of the body of the 30S subunit. In terms of biological role, with S5 and S12 plays an important role in translational accuracy. The protein is Small ribosomal subunit protein uS4 of Corynebacterium glutamicum (strain R).